The sequence spans 346 residues: Glycosyltransferase 1 domain-containing protein 1 (346 aa).

The N-terminal stretch at 1–16 (MRLLFLAVLRPHTGNA) is a signal peptide.

The protein belongs to the glycosyltransferase group 1 family. Glycosyltransferase 4 subfamily.

It is found in the secreted. This Pongo abelii (Sumatran orangutan) protein is Glycosyltransferase 1 domain-containing protein 1 (GLT1D1).